Reading from the N-terminus, the 209-residue chain is MGKFQVISHPLIQHKLSILRRTTTSTKDFRELVDEIAMLMGYEVSRDLPLEDVEIQTPVATTVQKQLAGKKLAIVPILRAGIGMVDGFLSLVPAAKVGHIGMYRDEETFQPVEYLVKLPEDIDQRQIFVVDPMLATGGSAILAVDSLKKRGAASIKFVCLVAAPEGVAALQEAHPDVDIYTAALDEKLNEHGYIVPGLGDAGDRLFGTK.

5-phospho-alpha-D-ribose 1-diphosphate contacts are provided by residues arginine 79, arginine 104, and aspartate 131 to serine 139. Residues isoleucine 194 and glycine 199–alanine 201 each bind uracil. Residue aspartate 200 coordinates 5-phospho-alpha-D-ribose 1-diphosphate.

This sequence belongs to the UPRTase family. It depends on Mg(2+) as a cofactor.

It carries out the reaction UMP + diphosphate = 5-phospho-alpha-D-ribose 1-diphosphate + uracil. It participates in pyrimidine metabolism; UMP biosynthesis via salvage pathway; UMP from uracil: step 1/1. With respect to regulation, allosterically activated by GTP. Functionally, catalyzes the conversion of uracil and 5-phospho-alpha-D-ribose 1-diphosphate (PRPP) to UMP and diphosphate. This chain is Uracil phosphoribosyltransferase, found in Streptococcus agalactiae serotype III (strain NEM316).